Here is an 82-residue protein sequence, read N- to C-terminus: Delta-actitoxin-Aeq2b 1 (82 aa).

The signal sequence occupies residues 1–19 (MNRLMILVFAAVILALASA). Residues 20–26 (DEDVDIA) constitute a propeptide that is removed on maturation. 3 disulfides stabilise this stretch: Cys32–Cys79, Cys34–Cys69, and Cys62–Cys80.

The protein belongs to the sea anemone sodium channel inhibitory toxin family. Type I subfamily.

The protein localises to the secreted. The protein resides in the nematocyst. In terms of biological role, binds specifically to voltage-gated sodium channels (Nav), thereby delaying their inactivation during signal transduction. Causes death to crabs. In Actinia equina (Beadlet anemone), this protein is Delta-actitoxin-Aeq2b 1.